The chain runs to 146 residues: UPF0178 protein BT9727_2823 (146 aa).

Belongs to the UPF0178 family.

The sequence is that of UPF0178 protein BT9727_2823 from Bacillus thuringiensis subsp. konkukian (strain 97-27).